We begin with the raw amino-acid sequence, 305 residues long: Virulence plasmid integrase pGP7-D (305 aa).

The region spanning 13–99 (LTFGEASEIW…CYISFTKFLY (87 aa)) is the Core-binding (CB) domain. Residues 127 to 303 (VKTVSISKKE…GNSSVANIPT (177 aa)) enclose the Tyr recombinase domain. Residues Lys188 and Arg257 contribute to the active site. Catalysis depends on Tyr289, which acts as the O-(3'-phospho-DNA)-tyrosine intermediate.

It belongs to the 'phage' integrase family.

The chain is Virulence plasmid integrase pGP7-D from Chlamydia muridarum (strain MoPn / Nigg).